We begin with the raw amino-acid sequence, 401 residues long: Argininosuccinate synthase (401 aa).

Ala-9–Ser-17 is an ATP binding site. L-citrulline is bound at residue Tyr-88. Gly-118 provides a ligand contact to ATP. Residues Thr-120, Asn-124, and Asp-125 each contribute to the L-aspartate site. Position 124 (Asn-124) interacts with L-citrulline. Residues Arg-128, Ser-177, Ser-186, Glu-262, and Tyr-274 each contribute to the L-citrulline site.

Belongs to the argininosuccinate synthase family. Type 1 subfamily. Homotetramer.

The protein localises to the cytoplasm. It catalyses the reaction L-citrulline + L-aspartate + ATP = 2-(N(omega)-L-arginino)succinate + AMP + diphosphate + H(+). It participates in amino-acid biosynthesis; L-arginine biosynthesis; L-arginine from L-ornithine and carbamoyl phosphate: step 2/3. The chain is Argininosuccinate synthase from Chlorobaculum tepidum (strain ATCC 49652 / DSM 12025 / NBRC 103806 / TLS) (Chlorobium tepidum).